A 601-amino-acid polypeptide reads, in one-letter code: Multidrug and toxin extrusion protein 2 (601 aa).

Residues 1–62 lie on the Cytoplasmic side of the membrane; it reads MNTAFAGFDE…PRGFWDEARA (62 aa). A helical membrane pass occupies residues 63–83; the sequence is LFVLSGPLFLFQVLNFLTYVV. Residues 84 to 95 are Extracellular-facing; the sequence is GTVFCGHLGKVE. The chain crosses the membrane as a helical span at residues 96 to 116; it reads LASVTLGVAFVNVCGVSVGAG. The Cytoplasmic segment spans residues 117–145; that stretch reads LSSACDTLMSQSFGSPNKKHVGVILQRGS. Residues 146–166 traverse the membrane as a helical segment; it reads LILLLCCLPCWALFLNTQHIL. Residues 167–182 lie on the Extracellular side of the membrane; the sequence is LLFRQDPAVSRLTQDY. The chain crosses the membrane as a helical span at residues 183–203; that stretch reads AMIFIPGLPAIFLYSLLAKYL. The Cytoplasmic portion of the chain corresponds to 204 to 212; sequence QNQGIVWPQ. A helical membrane pass occupies residues 213–233; that stretch reads VLSGVVGNCVNGVANYALVSV. Residues 234–241 lie on the Extracellular side of the membrane; the sequence is LNLGVRGS. The helical transmembrane segment at 242–262 threads the bilayer; the sequence is AYANTISQFVQAAFLFLHIVL. At 263–281 the chain is on the cytoplasmic side; it reads KKLHLETWEGWSSQCLRDW. A helical transmembrane segment spans residues 282–301; that stretch reads GPFLSLAIPSMLMMCVEWWA. Over 302 to 320 the chain is Extracellular; sequence YEIGSFLMGLLGVVDLSGQ. Residues 321-341 form a helical membrane-spanning segment; the sequence is AIIYEVATVVYMIPMGLGMAV. Over 342-361 the chain is Cytoplasmic; that stretch reads CVRVGTALGAADTLQAKRSA. Residues 362–382 form a helical membrane-spanning segment; it reads VSGLLCTAGTSLVVGTLLGLL. Topologically, residues 383 to 402 are extracellular; that stretch reads NSQLGYIFTSDEEVIALVNQ. The chain crosses the membrane as a helical span at residues 403-423; the sequence is VLPIYIVFQLVEAVCCVFGGV. The Cytoplasmic segment spans residues 424-437; the sequence is LRGTGKQAFGAIVN. Residues 438-458 form a helical membrane-spanning segment; sequence AIMYYIVGLPLGIVLTFVVGM. Arg-459 is a topological domain (extracellular). The helical transmembrane segment at 460-480 threads the bilayer; it reads IMGLWLGMLTCIFLAAVTFVV. Over 481 to 577 the chain is Cytoplasmic; sequence YAVQLDWKLA…LSVRQLLFRR (97 aa). A helical transmembrane segment spans residues 578–598; the sequence is GAALAASVAVLMAGLLVRVLT. The Extracellular portion of the chain corresponds to 599–601; it reads TGY.

The protein belongs to the multi antimicrobial extrusion (MATE) (TC 2.A.66.1) family. In terms of tissue distribution, expressed in renal cortical tissues.

The protein resides in the cell membrane. It localises to the apical cell membrane. It catalyses the reaction thiamine(out) + H(+)(in) = thiamine(in) + H(+)(out). It carries out the reaction estrone 3-sulfate(in) + H(+)(out) = estrone 3-sulfate(out) + H(+)(in). The catalysed reaction is creatinine(in) + H(+)(out) = creatinine(out) + H(+)(in). Multidrug efflux pump that functions as a H(+)/organic cation antiporter. Mediates the efflux of cationic compounds, such as the model cations, tetraethylammonium (TEA) and 1-methyl-4-phenylpyridinium (MPP+), the platinum-based drug oxaliplatin or weak bases that are positively charged at physiological pH, cimetidine or the antidiabetic drug metformin. Mediates the efflux of the endogenous compounds creatinine, thiamine and estrone-3-sulfate. Plays a physiological role in the excretion of drugs, toxins and endogenous metabolites through the kidney. The polypeptide is Multidrug and toxin extrusion protein 2 (SLC47A2) (Oryctolagus cuniculus (Rabbit)).